Here is an 875-residue protein sequence, read N- to C-terminus: Alanine--tRNA ligase (875 aa).

Zn(2+)-binding residues include His563, His567, Cys665, and His669.

The protein belongs to the class-II aminoacyl-tRNA synthetase family. Zn(2+) serves as cofactor.

Its subcellular location is the cytoplasm. The catalysed reaction is tRNA(Ala) + L-alanine + ATP = L-alanyl-tRNA(Ala) + AMP + diphosphate. Its function is as follows. Catalyzes the attachment of alanine to tRNA(Ala) in a two-step reaction: alanine is first activated by ATP to form Ala-AMP and then transferred to the acceptor end of tRNA(Ala). Also edits incorrectly charged Ser-tRNA(Ala) and Gly-tRNA(Ala) via its editing domain. The sequence is that of Alanine--tRNA ligase from Shewanella pealeana (strain ATCC 700345 / ANG-SQ1).